A 523-amino-acid chain; its full sequence is FAD-dependent monooxygenase drtC (523 aa).

The 176-residue stretch at 77–252 folds into the FAD-binding PCMH-type domain; that stretch reads TSLNSACIVL…TNFEVRAFPQ (176 aa).

This sequence belongs to the oxygen-dependent FAD-linked oxidoreductase family. Requires FAD as cofactor.

The protein operates within secondary metabolite biosynthesis; terpenoid biosynthesis. Functionally, FAD-dependent monooxygenase; part of the gene cluster that mediates the biosynthesis of various drimane-type sesquiterpene esters, compounds that exhibit diverse biological activities and are widely present in eukaryotes. The pathway begins with the synthesis of the backbone drimenol by the terpene cyclase drtB using farnesyl pyrophosphate (FPP) as substrate. The cytochrome P450 monooxygenase drtD is then responsible for the hydroxylations at C-6, C-9 and C-12, as well as the oxidation of hydroxyl groups at C-6 and C-11 to a ketone and an aldehyde, respectively. Then, the biosynthesis can go in two directions, either the hydroxylated drimenol is further hydroxylated at C-2 and C-3 by an enzyme(s) not associated with the drt cluster, or the FAD-binding oxidoreductase drtC further oxidizes C-11 or C-12 to form the butyrolactone ring. DrtB, drtD and drtC are solely responsible for the formation of the different drimane structures observed during drimane sesquiterpenes biosynthesis. The polyketide synthase drtA synthesizes different lengths (C6 and C8) of PKS chains, which are then oxidized to varying degrees by the short-chain dehydrogenase drtF. Finally, these PKS chains are transferred onto drimane sesquiterpenes by the acyltransferase drtE, forming the sesquiterpene esters. In addition to the different fatty acyl-CoA chains produced by drtA, drtE is also able to use cinnamoyl-CoA as a substrate. This chain is FAD-dependent monooxygenase drtC, found in Aspergillus calidoustus.